The primary structure comprises 288 residues: Diaminopimelate epimerase (288 aa).

Substrate is bound by residues N17, Q47, and N67. Catalysis depends on C76, which acts as the Proton donor. Substrate-binding positions include 77–78 (GN), N163, N196, and 214–215 (ER). The Proton acceptor role is filled by C223. 224-225 (GS) is a substrate binding site.

This sequence belongs to the diaminopimelate epimerase family. Homodimer.

It is found in the cytoplasm. The enzyme catalyses (2S,6S)-2,6-diaminopimelate = meso-2,6-diaminopimelate. The protein operates within amino-acid biosynthesis; L-lysine biosynthesis via DAP pathway; DL-2,6-diaminopimelate from LL-2,6-diaminopimelate: step 1/1. Functionally, catalyzes the stereoinversion of LL-2,6-diaminopimelate (L,L-DAP) to meso-diaminopimelate (meso-DAP), a precursor of L-lysine and an essential component of the bacterial peptidoglycan. This is Diaminopimelate epimerase from Rhodopseudomonas palustris (strain BisB18).